The sequence spans 92 residues: Signal recognition particle 19 kDa protein (92 aa).

This sequence belongs to the SRP19 family. In terms of assembly, part of the signal recognition particle protein translocation system, which is composed of SRP and FtsY. Archaeal SRP consists of a 7S RNA molecule of 300 nucleotides and two protein subunits: SRP54 and SRP19.

It is found in the cytoplasm. In terms of biological role, involved in targeting and insertion of nascent membrane proteins into the cytoplasmic membrane. Binds directly to 7S RNA and mediates binding of the 54 kDa subunit of the SRP. This is Signal recognition particle 19 kDa protein from Haloferax volcanii (strain ATCC 29605 / DSM 3757 / JCM 8879 / NBRC 14742 / NCIMB 2012 / VKM B-1768 / DS2) (Halobacterium volcanii).